Here is a 141-residue protein sequence, read N- to C-terminus: Nucleoside diphosphate kinase (141 aa).

ATP-binding residues include K11, F59, R87, T93, R104, and N114. H117 serves as the catalytic Pros-phosphohistidine intermediate.

The protein belongs to the NDK family. Homotetramer. Mg(2+) serves as cofactor.

It is found in the cytoplasm. The enzyme catalyses a 2'-deoxyribonucleoside 5'-diphosphate + ATP = a 2'-deoxyribonucleoside 5'-triphosphate + ADP. The catalysed reaction is a ribonucleoside 5'-diphosphate + ATP = a ribonucleoside 5'-triphosphate + ADP. In terms of biological role, major role in the synthesis of nucleoside triphosphates other than ATP. The ATP gamma phosphate is transferred to the NDP beta phosphate via a ping-pong mechanism, using a phosphorylated active-site intermediate. This is Nucleoside diphosphate kinase from Burkholderia mallei (strain NCTC 10247).